The chain runs to 336 residues: uncharacterized protein (336 aa).

2 disordered regions span residues 29-93 and 116-147; these read GGVS…HSGA and LQER…GVTG. Composition is skewed to polar residues over residues 70–82 and 125–141; these read SGGS…TSTA and PWRT…SQPH.

This is an uncharacterized protein from Bos taurus (Bovine).